Consider the following 684-residue polypeptide: Divalent metal transporter 1 (684 aa).

Topologically, residues 1–228 (MEKDFTERST…YRNKLSLYNK (228 aa)) are cytoplasmic. Positions 153–195 (NKRNNNNNNNNNNNNNNNNNNNNNNNNNNNNNNNNSNNVDNRK) are disordered. Over residues 156 to 191 (NNNNNNNNNNNNNNNNNNNNNNNNNNNNNNNNSNNV) the composition is skewed to low complexity. The chain crosses the membrane as a helical span at residues 229–247 (LRMCFNYFGPGWIVAIAYL). At 248 to 275 (DPGNLCSNLNVGLIRSPDPTLEKDYSGY) the chain is on the vacuolar side. Residues 276–299 (YLLWIMVYGHMLGFIFQVLSMRLG) form a helical membrane-spanning segment. The Cytoplasmic portion of the chain corresponds to 300 to 319 (HVTGLDLASLCSKEFDRTTS). A helical membrane pass occupies residues 320–345 (TIIYVLVQIAIWGAHIQAIIGTFIAL). Topologically, residues 346 to 350 (NLIFG) are vacuolar. The helical transmembrane segment at 351-370 (ISVKVAIFYTLFEAIIYSFL) threads the bilayer. Topologically, residues 371-381 (ENKSLGLLENV) are cytoplasmic. Residues 382 to 404 (LSFLVGILAVSFFVNVFMTPINF) form a helical membrane-spanning segment. At 405–423 (KELAISILYPRIPKGKEID) the chain is on the vacuolar side. A helical membrane pass occupies residues 424–445 (ALALLGSIISAHIFYLHTNLTA). The Cytoplasmic portion of the chain corresponds to 446-465 (KKKSVICNDLSLRRYNTLGT). A helical transmembrane segment spans residues 466 to 487 (IESGGSLFLSCLTNCIIVLTFA). Topologically, residues 488-515 (EVNLKSFERRDQYNLFTAYEVMRKSFGK) are vacuolar. The helical transmembrane segment at 516–534 (ISMYIWSFGLLSSGNNSSF) threads the bilayer. At 535-554 (MCEYASKSVVEGFLNKKINT) the chain is on the cytoplasmic side. Residues 555 to 573 (FVRVFTFRLMLFSLLYMFL) traverse the membrane as a helical segment. The Vacuolar portion of the chain corresponds to 574–584 (TLNKYTLDQLT). A helical transmembrane segment spans residues 585–603 (NFINVIQVLLLPMATIPLY). The Cytoplasmic segment spans residues 604–622 (RFSIHENVLGEFRLKKFPK). Residues 623-645 (FAVFLIIIAIIISNVLLTFLDFV) traverse the membrane as a helical segment. The Vacuolar segment spans residues 646–650 (HKETS). The chain crosses the membrane as a helical span at residues 651–673 (LITIFFLVIFSFLYFGFIIYFFN). Over 674–684 (IPIKKNYIQRN) the chain is Cytoplasmic.

The protein belongs to the NRAMP (TC 2.A.55) family.

It localises to the vacuole membrane. It catalyses the reaction Fe(2+)(in) = Fe(2+)(out). Its function is as follows. Iron transporter. Required for parasite development during the blood stages. Required for apicoplast biogenesis. Required for mitochondrial polarization. This is Divalent metal transporter 1 from Plasmodium falciparum (isolate 3D7).